The sequence spans 132 residues: Small ribosomal subunit protein uS9 (132 aa).

This sequence belongs to the universal ribosomal protein uS9 family.

In Mycoplasma pneumoniae (strain ATCC 29342 / M129 / Subtype 1) (Mycoplasmoides pneumoniae), this protein is Small ribosomal subunit protein uS9 (rpsI).